The sequence spans 426 residues: Elongation factor Tu, mitochondrial (426 aa).

A mitochondrion-targeting transit peptide spans 1-27 (MFKNLAGSFRAVSRVAFKTRPSLVRSY). Residues 34–230 (KPHVNIGTIG…AVDEHIPTPT (197 aa)) enclose the tr-type G domain. The G1 stretch occupies residues 43-50 (GHVDHGKT). 43-50 (GHVDHGKT) contributes to the GTP binding site. The G2 stretch occupies residues 84-88 (GITIS). The G3 stretch occupies residues 105 to 108 (DCPG). GTP-binding positions include 105-109 (DCPGH) and 160-163 (NKVD). The G4 stretch occupies residues 160–163 (NKVD). Positions 198-200 (SAL) are G5.

This sequence belongs to the TRAFAC class translation factor GTPase superfamily. Classic translation factor GTPase family. EF-Tu/EF-1A subfamily.

The protein resides in the mitochondrion. The protein operates within protein biosynthesis; polypeptide chain elongation. Its function is as follows. G-protein that, in its active GTP-bound form, binds to and delivers aminoacyl-tRNA to the A-site of ribosomes during protein biosynthesis. In the presence of a correct codon-anticodon match between the aminoacyl-tRNA and the A-site codon of the ribosome-bound mRNA, the ribosome acts as a GTPase activator and the GTP is hydrolyzed. The inactive GDP-bound form leaves the ribosome and must be recycled before binding another molecule of aminoacyl-tRNA. Required for mitochondrial protein biosynthesis and maintenance of mitochondrial DNA. The sequence is that of Elongation factor Tu, mitochondrial (TUF1) from Meyerozyma guilliermondii (strain ATCC 6260 / CBS 566 / DSM 6381 / JCM 1539 / NBRC 10279 / NRRL Y-324) (Yeast).